We begin with the raw amino-acid sequence, 314 residues long: Ribosomal RNA small subunit methyltransferase H (314 aa).

S-adenosyl-L-methionine is bound by residues 36 to 38 (AGH), D56, F83, D104, and Q111.

Belongs to the methyltransferase superfamily. RsmH family.

The protein localises to the cytoplasm. It carries out the reaction cytidine(1402) in 16S rRNA + S-adenosyl-L-methionine = N(4)-methylcytidine(1402) in 16S rRNA + S-adenosyl-L-homocysteine + H(+). Functionally, specifically methylates the N4 position of cytidine in position 1402 (C1402) of 16S rRNA. The polypeptide is Ribosomal RNA small subunit methyltransferase H (Brevibacillus brevis (strain 47 / JCM 6285 / NBRC 100599)).